We begin with the raw amino-acid sequence, 218 residues long: Octanoyltransferase (218 aa).

The BPL/LPL catalytic domain maps to 31-206; it reads REAADEVWLV…QLVKHLDYAE (176 aa). Residues 70–77, 137–139, and 150–152 each bind substrate; these read RGGQVTYH, SLG, and GLA. C168 acts as the Acyl-thioester intermediate in catalysis.

It belongs to the LipB family.

Its subcellular location is the cytoplasm. It carries out the reaction octanoyl-[ACP] + L-lysyl-[protein] = N(6)-octanoyl-L-lysyl-[protein] + holo-[ACP] + H(+). It functions in the pathway protein modification; protein lipoylation via endogenous pathway; protein N(6)-(lipoyl)lysine from octanoyl-[acyl-carrier-protein]: step 1/2. In terms of biological role, catalyzes the transfer of endogenously produced octanoic acid from octanoyl-acyl-carrier-protein onto the lipoyl domains of lipoate-dependent enzymes. Lipoyl-ACP can also act as a substrate although octanoyl-ACP is likely to be the physiological substrate. This chain is Octanoyltransferase, found in Pseudomonas savastanoi pv. phaseolicola (strain 1448A / Race 6) (Pseudomonas syringae pv. phaseolicola (strain 1448A / Race 6)).